The following is a 343-amino-acid chain: UDP-3-O-(3-hydroxymyristoyl)glucosamine N-acyltransferase (343 aa).

The Proton acceptor role is filled by His239.

The protein belongs to the transferase hexapeptide repeat family. LpxD subfamily. As to quaternary structure, homotrimer.

The enzyme catalyses a UDP-3-O-[(3R)-3-hydroxyacyl]-alpha-D-glucosamine + a (3R)-hydroxyacyl-[ACP] = a UDP-2-N,3-O-bis[(3R)-3-hydroxyacyl]-alpha-D-glucosamine + holo-[ACP] + H(+). The catalysed reaction is UDP-3-O-[(3R)-3-hydroxytetradecanoyl]-alpha-D-glucosamine + (3R)-hydroxytetradecanoyl-[ACP] = UDP-2-N,3-O-bis[(3R)-3-hydroxytetradecanoyl]-alpha-D-glucosamine + holo-[ACP] + H(+). The protein operates within glycolipid biosynthesis; lipid IV(A) biosynthesis; lipid IV(A) from (3R)-3-hydroxytetradecanoyl-[acyl-carrier-protein] and UDP-N-acetyl-alpha-D-glucosamine: step 3/6. Functionally, catalyzes the N-acylation of UDP-3-O-(hydroxytetradecanoyl)glucosamine using 3-hydroxytetradecanoyl-ACP as the acyl donor. Is involved in the biosynthesis of lipid A, a phosphorylated glycolipid that anchors the lipopolysaccharide to the outer membrane of the cell. This Blochmanniella pennsylvanica (strain BPEN) protein is UDP-3-O-(3-hydroxymyristoyl)glucosamine N-acyltransferase.